Here is a 181-residue protein sequence, read N- to C-terminus: Large ribosomal subunit protein uL10 (181 aa).

The protein belongs to the universal ribosomal protein uL10 family. As to quaternary structure, part of the ribosomal stalk of the 50S ribosomal subunit. The N-terminus interacts with L11 and the large rRNA to form the base of the stalk. The C-terminus forms an elongated spine to which L12 dimers bind in a sequential fashion forming a multimeric L10(L12)X complex.

In terms of biological role, forms part of the ribosomal stalk, playing a central role in the interaction of the ribosome with GTP-bound translation factors. This chain is Large ribosomal subunit protein uL10, found in Fervidobacterium nodosum (strain ATCC 35602 / DSM 5306 / Rt17-B1).